Reading from the N-terminus, the 135-residue chain is VapC ribonuclease aq_1901 (135 aa).

The 128-residue stretch at 3 to 130 folds into the PINc domain; sequence LLDTTVLLDF…FKKLGFKTVN (128 aa). Asp5 lines the Mg(2+) pocket.

This sequence belongs to the PINc/VapC protein family. Requires Mg(2+) as cofactor.

Toxic component of a type II toxin-antitoxin (TA) system. An RNase. The sequence is that of VapC ribonuclease aq_1901 from Aquifex aeolicus (strain VF5).